The following is a 65-amino-acid chain: Ferredoxin-like protein in vnf region (65 aa).

4Fe-4S ferredoxin-type domains follow at residues 2–29 (AMAIDGYECTVCGDCKPVCPTGSIVLQG) and 30–65 (GIYVIDADSCNECADLGEPRCLGVCPVDFCIQPLDD). [4Fe-4S] cluster contacts are provided by Cys10, Cys13, Cys16, Cys20, Cys39, Cys42, Cys50, and Cys54.

[4Fe-4S] cluster serves as cofactor.

The protein is Ferredoxin-like protein in vnf region of Azotobacter chroococcum mcd 1.